The sequence spans 219 residues: Cytochrome c oxidase assembly protein CtaG (219 aa).

Residues 1-13 (MDATDQGKSTSTT) are compositionally biased toward polar residues. Positions 1–24 (MDATDQGKSTSTTAAQAAPGKAAP) are disordered. At 1 to 29 (MDATDQGKSTSTTAAQAAPGKAAPRRGIG) the chain is on the cytoplasmic side. Positions 14–24 (AAQAAPGKAAP) are enriched in low complexity. Residues 30 to 52 (RDALVGGICGAVVVLMIGASYAA) traverse the membrane as a helical; Signal-anchor for type II membrane protein segment. At 53–219 (VPFYNWFCRA…GEPDKPRGSL (167 aa)) the chain is on the periplasmic side.

It belongs to the COX11/CtaG family.

The protein resides in the cell inner membrane. Its function is as follows. Exerts its effect at some terminal stage of cytochrome c oxidase synthesis, probably by being involved in the insertion of the copper B into subunit I. The chain is Cytochrome c oxidase assembly protein CtaG from Bradyrhizobium sp. (strain ORS 278).